A 130-amino-acid polypeptide reads, in one-letter code: Small ribosomal subunit protein uS8 (130 aa).

Belongs to the universal ribosomal protein uS8 family. Part of the 30S ribosomal subunit.

One of the primary rRNA binding proteins, it binds directly to 16S rRNA central domain where it helps coordinate assembly of the platform of the 30S subunit. The polypeptide is Small ribosomal subunit protein uS8 (Methanosphaerula palustris (strain ATCC BAA-1556 / DSM 19958 / E1-9c)).